Reading from the N-terminus, the 184-residue chain is ATP-dependent protease subunit HslV (184 aa).

T12 is an active-site residue. Residues A166, C169, and T172 each contribute to the Na(+) site.

The protein belongs to the peptidase T1B family. HslV subfamily. In terms of assembly, a double ring-shaped homohexamer of HslV is capped on each side by a ring-shaped HslU homohexamer. The assembly of the HslU/HslV complex is dependent on binding of ATP.

It localises to the cytoplasm. It carries out the reaction ATP-dependent cleavage of peptide bonds with broad specificity.. Allosterically activated by HslU binding. Functionally, protease subunit of a proteasome-like degradation complex believed to be a general protein degrading machinery. In Brucella melitensis biotype 1 (strain ATCC 23456 / CCUG 17765 / NCTC 10094 / 16M), this protein is ATP-dependent protease subunit HslV.